The primary structure comprises 330 residues: DNA primase small subunit PriS (330 aa).

Catalysis depends on residues D101 and D103. 4 residues coordinate Zn(2+): C116, C119, C128, and D131. D235 is an active-site residue.

The protein belongs to the eukaryotic-type primase small subunit family. In terms of assembly, heterodimer of a small subunit (PriS) and a large subunit (PriL). The cofactor is Mg(2+). Requires Mn(2+) as cofactor.

In terms of biological role, catalytic subunit of DNA primase, an RNA polymerase that catalyzes the synthesis of short RNA molecules used as primers for DNA polymerase during DNA replication. The small subunit contains the primase catalytic core and has DNA synthesis activity on its own. Binding to the large subunit stabilizes and modulates the activity, increasing the rate of DNA synthesis while decreasing the length of the DNA fragments, and conferring RNA synthesis capability. The DNA polymerase activity may enable DNA primase to also catalyze primer extension after primer synthesis. May also play a role in DNA repair. The chain is DNA primase small subunit PriS from Saccharolobus islandicus (strain Y.N.15.51 / Yellowstone #2) (Sulfolobus islandicus).